The chain runs to 289 residues: UPF0276 protein BPP1075 (289 aa).

It belongs to the UPF0276 family.

The polypeptide is UPF0276 protein BPP1075 (Bordetella parapertussis (strain 12822 / ATCC BAA-587 / NCTC 13253)).